A 147-amino-acid polypeptide reads, in one-letter code: Acidic phospholipase A2 S7-48J (147 aa).

The first 19 residues, 1 to 19, serve as a signal peptide directing secretion; the sequence is MYPAHLLVLLAVCVSLLGA. The propeptide occupies 20–27; that stretch reads SDIPPQPL. Disulfide bonds link cysteine 38-cysteine 99, cysteine 54-cysteine 146, cysteine 56-cysteine 72, cysteine 71-cysteine 127, cysteine 78-cysteine 120, cysteine 88-cysteine 113, and cysteine 106-cysteine 118. Residues tyrosine 55, glycine 57, and glycine 59 each coordinate Ca(2+). Histidine 75 is a catalytic residue. Aspartate 76 is a Ca(2+) binding site. Aspartate 121 is a catalytic residue.

It belongs to the phospholipase A2 family. Group I subfamily. D49 sub-subfamily. Ca(2+) serves as cofactor. Expressed by the venom gland.

It localises to the secreted. It catalyses the reaction a 1,2-diacyl-sn-glycero-3-phosphocholine + H2O = a 1-acyl-sn-glycero-3-phosphocholine + a fatty acid + H(+). In terms of biological role, snake venom phospholipase A2 (PLA2) that inhibits collagen-induced platelet aggregation. PLA2 catalyzes the calcium-dependent hydrolysis of the 2-acyl groups in 3-sn-phosphoglycerides. This is Acidic phospholipase A2 S7-48J from Austrelaps superbus (Lowland copperhead snake).